We begin with the raw amino-acid sequence, 164 residues long: Ribonuclease P protein component 2 (164 aa).

It belongs to the eukaryotic/archaeal RNase P protein component 2 family. As to quaternary structure, consists of a catalytic RNA component and at least 4-5 protein subunits.

Its subcellular location is the cytoplasm. It carries out the reaction Endonucleolytic cleavage of RNA, removing 5'-extranucleotides from tRNA precursor.. Part of ribonuclease P, a protein complex that generates mature tRNA molecules by cleaving their 5'-ends. In Halobacterium salinarum (strain ATCC 29341 / DSM 671 / R1), this protein is Ribonuclease P protein component 2.